We begin with the raw amino-acid sequence, 569 residues long: MSYKISRAAYANMFGPTTGDKVRLADTELFIEVEKDFTTYGEEVKFGGGKVIRDGMGQSQVTRANGAVDTVITNALIVDTWGIVKADVGLKNGRIAAIGKAGNPDTQPGITIIIGPSTEIIAGEGKILTAGGMDAHIHFICPQQIEEALMSGVTTMLGGGSGPAHGTLATTCTGAWHIERMIESFDAFPMNLALAGKGNASLPAALEEMVLAGACSLKLHEDWGTTPAAIDCCLSVADEYDVQVMIHTDTLNESGFVEDTIGAIKGRTIHAFHTEGAGGGHAPDIIKICGQSNVIPSSTNPTRPYTVNTIAEHLDMLMVCHHLSPSIPEDIAFAESRIRKETIAAEDILHDIGAFSIISSDSQAMGRVGEVAIRTWQTADKMKRQRGRLAQETGDNDNFRVKRYIAKYTINPAIAQGLSHEVGSIEVGKRADLVIWNPAFFGVKPEMVLLGGSIAAAPMGDPNASIPTPQPMHYRPMFAAYGKSLTNSSVTFVSQASLDAGLAGRLGVAKKLLAVKNTRGGISKASMIHNSLTPHIEVDPETYEVRADGELLTCEPATVLPMAQRYFLF.

Positions 131-569 (GGMDAHIHFI…LPMAQRYFLF (439 aa)) constitute a Urease domain. Ni(2+)-binding residues include His-136, His-138, and Lys-218. Lys-218 is subject to N6-carboxylysine. His-220 contributes to the substrate binding site. Positions 247 and 273 each coordinate Ni(2+). His-321 functions as the Proton donor in the catalytic mechanism. Asp-361 serves as a coordination point for Ni(2+).

It belongs to the metallo-dependent hydrolases superfamily. Urease alpha subunit family. As to quaternary structure, heterotrimer of UreA (gamma), UreB (beta) and UreC (alpha) subunits. Three heterotrimers associate to form the active enzyme. Ni cation serves as cofactor. Post-translationally, carboxylation allows a single lysine to coordinate two nickel ions.

It localises to the cytoplasm. The catalysed reaction is urea + 2 H2O + H(+) = hydrogencarbonate + 2 NH4(+). It functions in the pathway nitrogen metabolism; urea degradation; CO(2) and NH(3) from urea (urease route): step 1/1. This is Urease subunit alpha from Rhizobium rhizogenes (strain K84 / ATCC BAA-868) (Agrobacterium radiobacter).